We begin with the raw amino-acid sequence, 383 residues long: Xylose/arabinose import ATP-binding protein XacJ (383 aa).

In terms of domain architecture, ABC transporter spans 4 to 235 (IQLTDLTKRF…PNNLFVAEFI (232 aa)). 36–43 (GPSGCGKS) contributes to the ATP binding site.

It belongs to the ABC transporter superfamily. Carbohydrate uptake transporter-1 (CUT1) (TC 3.A.1.1) family. The complex is composed of two ATP-binding proteins (XacJ and XacK), two transmembrane proteins (XacH and XacI) and a solute-binding protein (XacG).

The protein resides in the cell membrane. It carries out the reaction D-xylose(out) + ATP + H2O = D-xylose(in) + ADP + phosphate + H(+). It catalyses the reaction L-arabinose(out) + ATP + H2O = L-arabinose(in) + ADP + phosphate + H(+). Part of the ABC transporter complex XacGHIJK involved in the uptake of xylose and arabinose. Responsible for energy coupling to the transport system. The polypeptide is Xylose/arabinose import ATP-binding protein XacJ (Haloferax volcanii (strain ATCC 29605 / DSM 3757 / JCM 8879 / NBRC 14742 / NCIMB 2012 / VKM B-1768 / DS2) (Halobacterium volcanii)).